A 226-amino-acid chain; its full sequence is Beta-casein (226 aa).

An N-terminal signal peptide occupies residues 1–15 (MKVLILACLVALALA). A Phosphothreonine; in form 5-P modification is found at T18. A Phosphoserine; in form 4-P and form 5-P modification is found at S21. Position 23 is a phosphoserine; in form 3-P, form 4-P and form 5-P (S23). S24 and S25 each carry phosphoserine; in form 1-P, form 2-P, form 3-P, form 4-P and form 5-P.

It belongs to the beta-casein family. Form 1-P is phosphorylated once; half of the molecules are phosphorylated on Ser-24, half on Ser-25. Mammary gland specific. Secreted in milk.

The protein resides in the secreted. Its function is as follows. Important role in determination of the surface properties of the casein micelles. This chain is Beta-casein (CSN2), found in Homo sapiens (Human).